A 200-amino-acid polypeptide reads, in one-letter code: Formate dehydrogenase iron-sulfur subunit (200 aa).

4Fe-4S ferredoxin-type domains lie at 7 to 37 (VKFY…VGVN), 50 to 81 (GKEK…VRAD), and 82 to 111 (GIVL…FPKS). Cys-16, Cys-19, Cys-22, Cys-26, Cys-59, Cys-62, Cys-67, Cys-71, Cys-91, Cys-94, Cys-97, Cys-101, Cys-123, Cys-126, Cys-155, and Cys-159 together coordinate [4Fe-4S] cluster.

In terms of assembly, formate dehydrogenase is a membrane-bound complex, formed of at least three different subunits. [4Fe-4S] cluster is required as a cofactor.

This chain is an electron transfer unit containing 18 cysteine residues, 16 of which occur in four clusters. This is Formate dehydrogenase iron-sulfur subunit (fdhB1) from Wolinella succinogenes (strain ATCC 29543 / DSM 1740 / CCUG 13145 / JCM 31913 / LMG 7466 / NCTC 11488 / FDC 602W) (Vibrio succinogenes).